The chain runs to 215 residues: Large ribosomal subunit protein uL3c (215 aa).

A disordered region spans residues 132–151 (RGAMSHGSKSHRRPGSIGAG).

This sequence belongs to the universal ribosomal protein uL3 family. Part of the 50S ribosomal subunit.

The protein resides in the plastid. It localises to the chloroplast. Its function is as follows. One of the primary rRNA binding proteins, it binds directly near the 3'-end of the 23S rRNA, where it nucleates assembly of the 50S subunit. This Cyanidium caldarium (Red alga) protein is Large ribosomal subunit protein uL3c (rpl3).